A 426-amino-acid chain; its full sequence is Gamma-glutamyl phosphate reductase (426 aa).

It belongs to the gamma-glutamyl phosphate reductase family.

The protein localises to the cytoplasm. It catalyses the reaction L-glutamate 5-semialdehyde + phosphate + NADP(+) = L-glutamyl 5-phosphate + NADPH + H(+). It participates in amino-acid biosynthesis; L-proline biosynthesis; L-glutamate 5-semialdehyde from L-glutamate: step 2/2. Catalyzes the NADPH-dependent reduction of L-glutamate 5-phosphate into L-glutamate 5-semialdehyde and phosphate. The product spontaneously undergoes cyclization to form 1-pyrroline-5-carboxylate. This is Gamma-glutamyl phosphate reductase from Delftia acidovorans (strain DSM 14801 / SPH-1).